A 568-amino-acid chain; its full sequence is Protein phosphatase 1 regulatory inhibitor subunit 16B (568 aa).

The stretch at 15-55 (EKVPTLERLRAAQKRRAQQLKKWAQYEQDLLHRKRKHERKR) forms a coiled coil. Ser69 is subject to Phosphoserine. ANK repeat units lie at residues 100–129 (DGLTALHQCCIDNFEEIVKLLLSHGANVNA), 133–162 (ELWTPLHAAATCGHINLVKILVQYGADLLA), 228–257 (QGATLLHIAGANGYLRAAELLLDHGVRVDV), and 261–290 (DGWEPLHAAAFWGQMPMAELLVSHGASLSA). Residues Ser333, Ser337, and Ser350 each carry the phosphoserine modification. A disordered region spans residues 373 to 403 (SAAEDQRTSTYNGDIRETRTDQENKDPNPRL). Over residues 386–403 (DIRETRTDQENKDPNPRL) the composition is skewed to basic and acidic residues. The residue at position 477 (Ser477) is a Phosphoserine. Residues 505 to 517 (SSVARSGESSSEG) show a composition bias toward low complexity. The tract at residues 505–527 (SSVARSGESSSEGKAPLIGGRTS) is disordered. One copy of the ANK 5 repeat lies at 531-560 (SNGTSVYYTVTSGDPPLLKFKAPMEEMEEK). Cys564 is lipidated: S-palmitoyl cysteine. Position 565 is a cysteine methyl ester (Cys565). A lipid anchor (S-farnesyl cysteine) is attached at Cys565. Residues 566–568 (RIS) constitute a propeptide, removed in mature form.

In terms of assembly, interacts with PPP1CA, PPP1CB and MSN. Interacts (via its fourth ankyrin repeat) with the mature dimeric form of RPSA/LAMR1. Interacts with EEF1A1. Interacts with PTEN. Interacts with ECE1. Post-translationally, phosphorylated by PKA and, after PKA priming, by GSK3B. Phosphorylation by GSK3B reduces its association with PP1C and enhances PP1C activity. Dephosphorylation by its associated PP1C results in enhanced association with PP1C, but reduced PP1C activity.

It is found in the cell membrane. The protein resides in the nucleus. It localises to the cell projection. Its function is as follows. Regulator of protein phosphatase 1 (PP1) that acts as a positive regulator of pulmonary endothelial cell (EC) barrier function. Protects the endothelial barrier from lipopolysaccharide (LPS)-induced vascular leakage. Involved in the regulation of the PI3K/AKT signaling pathway. Involved in the regulation of angiogenesis and endothelial cell proliferation through the control of ECE1 dephosphorylation, trafficking and activity. Involved in the regulation of endothelial cell filopodia extension. May be a downstream target for TGF-beta1 signaling cascade in endothelial cells. Involved in PKA-mediated moesin dephosphorylation which is important in EC barrier protection against thrombin stimulation. Promotes the interaction of PPP1CA with RPSA/LAMR1 and in turn facilitates the dephosphorylation of RPSA/LAMR1. Involved in the dephosphorylation of EEF1A1. The chain is Protein phosphatase 1 regulatory inhibitor subunit 16B (Ppp1r16b) from Mus musculus (Mouse).